The chain runs to 564 residues: CTP synthase (564 aa).

An amidoligase domain region spans residues 1 to 265; that stretch reads MTKFVFVTGG…DEIVCHRLDI (265 aa). CTP is bound at residue S13. UTP is bound at residue S13. ATP-binding positions include 14–19 and D71; that span reads SLGKGI. Residues D71 and E139 each contribute to the Mg(2+) site. CTP contacts are provided by residues 146-148, 186-191, and K222; these read DIE and KTKPTQ. UTP-binding positions include 186-191 and K222; that span reads KTKPTQ. A Glutamine amidotransferase type-1 domain is found at 290–543; it reads SIALVGKYVD…IQAAISFAGQ (254 aa). G351 contributes to the L-glutamine binding site. C378 serves as the catalytic Nucleophile; for glutamine hydrolysis. L-glutamine is bound by residues 379 to 382, E402, and R469; that span reads LGMQ. Residues H516 and E518 contribute to the active site.

The protein belongs to the CTP synthase family. In terms of assembly, homotetramer.

It catalyses the reaction UTP + L-glutamine + ATP + H2O = CTP + L-glutamate + ADP + phosphate + 2 H(+). The catalysed reaction is L-glutamine + H2O = L-glutamate + NH4(+). It carries out the reaction UTP + NH4(+) + ATP = CTP + ADP + phosphate + 2 H(+). Its pathway is pyrimidine metabolism; CTP biosynthesis via de novo pathway; CTP from UDP: step 2/2. Allosterically activated by GTP, when glutamine is the substrate; GTP has no effect on the reaction when ammonia is the substrate. The allosteric effector GTP functions by stabilizing the protein conformation that binds the tetrahedral intermediate(s) formed during glutamine hydrolysis. Inhibited by the product CTP, via allosteric rather than competitive inhibition. Its function is as follows. Catalyzes the ATP-dependent amination of UTP to CTP with either L-glutamine or ammonia as the source of nitrogen. Regulates intracellular CTP levels through interactions with the four ribonucleotide triphosphates. The polypeptide is CTP synthase (Nitrosomonas europaea (strain ATCC 19718 / CIP 103999 / KCTC 2705 / NBRC 14298)).